The sequence spans 447 residues: MREIVHIQAGQCGNQIGAKFWEIISDEHGIDATGAYHGDSDLQLERINVYYNEASGGKYVPRAVLVDLEPGTMDSVRSGPFGQIFRPDNFVFGQSGAGNNWAKGHYTEGAELVDSVLDVVRKEAESCDCLQGFQLTHSLGGGTGSGMGTLLISKIREEYPDRIMNTYSVVPSPKVSDTVVEPYNATLSVHQLVENTDETYCIDNEALYDICFRTLKLTTPTYGDLNHLVSLTMSGVTTCLRFPGQLNADLRKLAVNMVPFPRLHFFMPGFAPLTSRGSQQYRALTVPELTQQMFDAKNMMAACDPRHGRYLTVAAIFRGRMSMKEVDEQMLNIQNKNSSYFVEWIPNNVKTAVCDIPPRGLKMSATFIGNSTAIQELFKRISEQFTAMFRRKAFLHWYTGEGMDEMEFTEAESNMNDLVSEYQQYQEATADEDAEFEEEQEAEVDEN.

Q11 is a GTP binding site. Phosphoserine is present on S40. GTP contacts are provided by E69, S138, G142, T143, G144, N204, and N226. Position 69 (E69) interacts with Mg(2+). S339 is modified (phosphoserine). Positions 427 to 447 are disordered; sequence EATADEDAEFEEEQEAEVDEN. Acidic residues predominate over residues 429–447; the sequence is TADEDAEFEEEQEAEVDEN.

This sequence belongs to the tubulin family. As to quaternary structure, dimer of alpha and beta chains. A typical microtubule is a hollow water-filled tube with an outer diameter of 25 nm and an inner diameter of 15 nM. Alpha-beta heterodimers associate head-to-tail to form protofilaments running lengthwise along the microtubule wall with the beta-tubulin subunit facing the microtubule plus end conferring a structural polarity. Microtubules usually have 13 protofilaments but different protofilament numbers can be found in some organisms and specialized cells. Interacts with mgr and Vhl. Mg(2+) is required as a cofactor.

Its subcellular location is the cytoplasm. The protein resides in the cytoskeleton. Functionally, tubulin is the major constituent of microtubules, a cylinder consisting of laterally associated linear protofilaments composed of alpha- and beta-tubulin heterodimers. Microtubules grow by the addition of GTP-tubulin dimers to the microtubule end, where a stabilizing cap forms. Below the cap, tubulin dimers are in GDP-bound state, owing to GTPase activity of alpha-tubulin. In Drosophila melanogaster (Fruit fly), this protein is Tubulin beta-1 chain (betaTub56D).